Consider the following 285-residue polypeptide: Tropomyosin-2 (285 aa).

Positions 1–277 form a coiled coil; that stretch reads MDAIKKKMQA…KDIGDDLDTA (277 aa). Positions 103–133 are disordered; that stretch reads EERLATATAKLSEASQAADESERARKVLENR. Basic and acidic residues predominate over residues 122–133; it reads ESERARKVLENR.

This sequence belongs to the tropomyosin family. Homodimer.

Functionally, tropomyosin, in association with the troponin complex, plays a central role in the calcium dependent regulation of muscle contraction. The protein is Tropomyosin-2 of Bombyx mori (Silk moth).